We begin with the raw amino-acid sequence, 343 residues long: Thiamine thiazole synthase 4, chloroplastic (343 aa).

Substrate contacts are provided by residues alanine 89, glutamate 109–glutamine 110, glycine 117, and alanine 182. Cysteine 211 carries the post-translational modification 2,3-didehydroalanine (Cys). Substrate contacts are provided by residues aspartate 213, histidine 228, methionine 280, and arginine 290 to glycine 292.

The protein belongs to the THI4 family. As to quaternary structure, homooctamer. The cofactor is Fe cation. During the catalytic reaction, a sulfide is transferred from Cys-211 to a reaction intermediate, generating a dehydroalanine residue.

The protein resides in the plastid. Its subcellular location is the chloroplast. The catalysed reaction is [ADP-thiazole synthase]-L-cysteine + glycine + NAD(+) = [ADP-thiazole synthase]-dehydroalanine + ADP-5-ethyl-4-methylthiazole-2-carboxylate + nicotinamide + 3 H2O + 2 H(+). Involved in biosynthesis of the thiamine precursor thiazole. Catalyzes the conversion of NAD and glycine to adenosine diphosphate 5-(2-hydroxyethyl)-4-methylthiazole-2-carboxylic acid (ADT), an adenylated thiazole intermediate. The reaction includes an iron-dependent sulfide transfer from a conserved cysteine residue of the protein to a thiazole intermediate. The enzyme can only undergo a single turnover, which suggests it is a suicide enzyme. May have additional roles in adaptation to various stress conditions and in DNA damage tolerance. The chain is Thiamine thiazole synthase 4, chloroplastic from Physcomitrium patens (Spreading-leaved earth moss).